The chain runs to 204 residues: UPF0056 membrane protein TC_0241 (204 aa).

Transmembrane regions (helical) follow at residues 8 to 28, 46 to 66, 68 to 88, 107 to 127, 138 to 158, and 176 to 196; these read LTLL…FVAL, IFAL…FRLL, VSLP…AINM, IFYP…STLG, LVLG…FFSS, and FGIS…STAF.

This sequence belongs to the UPF0056 (MarC) family.

The protein localises to the cell membrane. The chain is UPF0056 membrane protein TC_0241 from Chlamydia muridarum (strain MoPn / Nigg).